We begin with the raw amino-acid sequence, 305 residues long: tRNA dimethylallyltransferase (305 aa).

11–18 serves as a coordination point for ATP; that stretch reads GPTAVGKT. Substrate is bound at residue 13 to 18; that stretch reads TAVGKT. Residues 36-39 form an interaction with substrate tRNA region; that stretch reads DSMQ.

Belongs to the IPP transferase family. As to quaternary structure, monomer. Mg(2+) is required as a cofactor.

It catalyses the reaction adenosine(37) in tRNA + dimethylallyl diphosphate = N(6)-dimethylallyladenosine(37) in tRNA + diphosphate. Its function is as follows. Catalyzes the transfer of a dimethylallyl group onto the adenine at position 37 in tRNAs that read codons beginning with uridine, leading to the formation of N6-(dimethylallyl)adenosine (i(6)A). The polypeptide is tRNA dimethylallyltransferase (Listeria monocytogenes serovar 1/2a (strain ATCC BAA-679 / EGD-e)).